Consider the following 476-residue polypeptide: Bifunctional protein HldE (476 aa).

The segment at 1–319 (MKVSLPAFEK…EALALHHGES (319 aa)) is ribokinase. 195-198 (NMSE) contacts ATP. Asp264 is a catalytic residue. The cytidylyltransferase stretch occupies residues 345–476 (MTNGCFDILH…AIIQNIMANQ (132 aa)).

The protein in the N-terminal section; belongs to the carbohydrate kinase PfkB family. It in the C-terminal section; belongs to the cytidylyltransferase family. Homodimer.

The enzyme catalyses D-glycero-beta-D-manno-heptose 7-phosphate + ATP = D-glycero-beta-D-manno-heptose 1,7-bisphosphate + ADP + H(+). It catalyses the reaction D-glycero-beta-D-manno-heptose 1-phosphate + ATP + H(+) = ADP-D-glycero-beta-D-manno-heptose + diphosphate. Its pathway is nucleotide-sugar biosynthesis; ADP-L-glycero-beta-D-manno-heptose biosynthesis; ADP-L-glycero-beta-D-manno-heptose from D-glycero-beta-D-manno-heptose 7-phosphate: step 1/4. It participates in nucleotide-sugar biosynthesis; ADP-L-glycero-beta-D-manno-heptose biosynthesis; ADP-L-glycero-beta-D-manno-heptose from D-glycero-beta-D-manno-heptose 7-phosphate: step 3/4. Catalyzes the phosphorylation of D-glycero-D-manno-heptose 7-phosphate at the C-1 position to selectively form D-glycero-beta-D-manno-heptose-1,7-bisphosphate. Functionally, catalyzes the ADP transfer from ATP to D-glycero-beta-D-manno-heptose 1-phosphate, yielding ADP-D-glycero-beta-D-manno-heptose. The sequence is that of Bifunctional protein HldE from Shewanella baltica (strain OS195).